A 337-amino-acid polypeptide reads, in one-letter code: S-adenosylmethionine:tRNA ribosyltransferase-isomerase (337 aa).

This sequence belongs to the QueA family. Monomer.

It localises to the cytoplasm. It carries out the reaction 7-aminomethyl-7-carbaguanosine(34) in tRNA + S-adenosyl-L-methionine = epoxyqueuosine(34) in tRNA + adenine + L-methionine + 2 H(+). The protein operates within tRNA modification; tRNA-queuosine biosynthesis. Its function is as follows. Transfers and isomerizes the ribose moiety from AdoMet to the 7-aminomethyl group of 7-deazaguanine (preQ1-tRNA) to give epoxyqueuosine (oQ-tRNA). This Legionella pneumophila (strain Corby) protein is S-adenosylmethionine:tRNA ribosyltransferase-isomerase.